The primary structure comprises 78 residues: Conotoxin TsMSGL-13 (78 aa).

The first 24 residues, 1–24 (MSGLGIMVLTLLLFMFMATSHQDA), serve as a signal peptide directing secretion. The propeptide occupies 25-44 (GEKQATQRDAINVRRRRSIT). 3 disulfide bridges follow: cysteine 51–cysteine 63, cysteine 55–cysteine 72, and cysteine 62–cysteine 76. The residue at position 77 (phenylalanine 77) is a Phenylalanine amide.

It belongs to the conotoxin O3 superfamily. As to expression, expressed by the venom duct.

The protein resides in the secreted. The sequence is that of Conotoxin TsMSGL-13 from Conus tessulatus (Tessellate cone).